Consider the following 434-residue polypeptide: Histidinol dehydrogenase (434 aa).

3 residues coordinate NAD(+): Tyr130, Gln188, and Asn211. Substrate is bound by residues Ser237, Gln259, and His262. Zn(2+) contacts are provided by Gln259 and His262. Residues Glu326 and His327 each act as proton acceptor in the active site. Positions 327, 360, 414, and 419 each coordinate substrate. Zn(2+) is bound at residue Asp360. Zn(2+) is bound at residue His419.

The protein belongs to the histidinol dehydrogenase family. Homodimer. The cofactor is Zn(2+).

It catalyses the reaction L-histidinol + 2 NAD(+) + H2O = L-histidine + 2 NADH + 3 H(+). It functions in the pathway amino-acid biosynthesis; L-histidine biosynthesis; L-histidine from 5-phospho-alpha-D-ribose 1-diphosphate: step 9/9. Catalyzes the sequential NAD-dependent oxidations of L-histidinol to L-histidinaldehyde and then to L-histidine. This chain is Histidinol dehydrogenase, found in Salmonella choleraesuis (strain SC-B67).